The primary structure comprises 414 residues: Serine hydroxymethyltransferase (414 aa).

(6S)-5,6,7,8-tetrahydrofolate is bound by residues leucine 116 and 120 to 122 (GHL). Residue lysine 224 is modified to N6-(pyridoxal phosphate)lysine. Residues glutamate 240 and 348–350 (SPF) each bind (6S)-5,6,7,8-tetrahydrofolate.

This sequence belongs to the SHMT family. Homodimer. The cofactor is pyridoxal 5'-phosphate.

It is found in the cytoplasm. It catalyses the reaction (6R)-5,10-methylene-5,6,7,8-tetrahydrofolate + glycine + H2O = (6S)-5,6,7,8-tetrahydrofolate + L-serine. It functions in the pathway one-carbon metabolism; tetrahydrofolate interconversion. Its pathway is amino-acid biosynthesis; glycine biosynthesis; glycine from L-serine: step 1/1. Catalyzes the reversible interconversion of serine and glycine with tetrahydrofolate (THF) serving as the one-carbon carrier. This reaction serves as the major source of one-carbon groups required for the biosynthesis of purines, thymidylate, methionine, and other important biomolecules. Also exhibits THF-independent aldolase activity toward beta-hydroxyamino acids, producing glycine and aldehydes, via a retro-aldol mechanism. In Campylobacter concisus (strain 13826), this protein is Serine hydroxymethyltransferase.